The primary structure comprises 209 residues: FMN-dependent NADH:quinone oxidoreductase (209 aa).

Residues Ser9 and 15-17 each bind FMN; that span reads SNS.

It belongs to the azoreductase type 1 family. In terms of assembly, homodimer. It depends on FMN as a cofactor.

The catalysed reaction is 2 a quinone + NADH + H(+) = 2 a 1,4-benzosemiquinone + NAD(+). It catalyses the reaction N,N-dimethyl-1,4-phenylenediamine + anthranilate + 2 NAD(+) = 2-(4-dimethylaminophenyl)diazenylbenzoate + 2 NADH + 2 H(+). Functionally, quinone reductase that provides resistance to thiol-specific stress caused by electrophilic quinones. In terms of biological role, also exhibits azoreductase activity. Catalyzes the reductive cleavage of the azo bond in aromatic azo compounds to the corresponding amines. The polypeptide is FMN-dependent NADH:quinone oxidoreductase (Bordetella parapertussis (strain 12822 / ATCC BAA-587 / NCTC 13253)).